Consider the following 383-residue polypeptide: Non-structural maintenance of chromosomes element 4 homolog B (383 aa).

Basic and acidic residues predominate over residues 1-22; it reads MRNSVKWETELTGDRSRRREAD. Disordered regions lie at residues 1–59, 198–231, and 355–383; these read MRNS…EQGI, MKQR…EKKS, and QGSV…NGGL. The segment covering 201 to 212 has biased composition (basic residues); sequence RKSRVGNRKRTK. Over residues 355-372 the composition is skewed to polar residues; the sequence is QGSVIQEETVVEDSSNME.

It belongs to the NSE4 family. Interacts with SMC5, SMC6A or SMC6B. The SMC5-SMC6 complex is composed of the SMC5 and SMC6 heterodimer attached via their hinge domain and from the non-SMC subunit NSE4A or NSE4B. As to expression, not expressed in seedlings, rosette leaves and floral buds.

It localises to the nucleus. Functionally, component of the SMC5-SMC6 complex, that promotes sister chromatid alignment after DNA damage and facilitates double-stranded DNA breaks (DSBs) repair via homologous recombination between sister chromatids. This chain is Non-structural maintenance of chromosomes element 4 homolog B (NSE4B), found in Arabidopsis thaliana (Mouse-ear cress).